A 466-amino-acid chain; its full sequence is 3-isopropylmalate dehydratase large subunit (466 aa).

Residues Cys-347, Cys-407, and Cys-410 each coordinate [4Fe-4S] cluster.

It belongs to the aconitase/IPM isomerase family. LeuC type 1 subfamily. As to quaternary structure, heterodimer of LeuC and LeuD. The cofactor is [4Fe-4S] cluster.

It carries out the reaction (2R,3S)-3-isopropylmalate = (2S)-2-isopropylmalate. It participates in amino-acid biosynthesis; L-leucine biosynthesis; L-leucine from 3-methyl-2-oxobutanoate: step 2/4. In terms of biological role, catalyzes the isomerization between 2-isopropylmalate and 3-isopropylmalate, via the formation of 2-isopropylmaleate. In Solibacter usitatus (strain Ellin6076), this protein is 3-isopropylmalate dehydratase large subunit.